A 425-amino-acid chain; its full sequence is Formyl-CoA:oxalate CoA-transferase (425 aa).

CoA is bound by residues 17–18 (QS), Arg38, 72–75 (LDTK), 96–98 (NFG), Arg104, and 136–139 (KVYE). The active-site Nucleophile is Asp168. 247 to 249 (GGQ) is a binding site for substrate.

The protein belongs to the CoA-transferase III family. Frc subfamily. In terms of assembly, homodimer.

It catalyses the reaction formyl-CoA + oxalate = oxalyl-CoA + formate. It functions in the pathway metabolic intermediate degradation; oxalate degradation; CO(2) and formate from oxalate: step 1/2. In terms of biological role, involved in the catabolism of oxalate and in the adapatation to low pH via the induction of the oxalate-dependent acid tolerance response (ATR). Catalyzes the transfer of the CoA moiety from formyl-CoA to oxalate. In Rhodopseudomonas palustris (strain TIE-1), this protein is Formyl-CoA:oxalate CoA-transferase.